The following is a 99-amino-acid chain: NADH-quinone oxidoreductase subunit K (99 aa).

3 consecutive transmembrane segments (helical) span residues 3 to 23, 28 to 48, and 59 to 79; these read PDNY…GVLL, IVVF…FVAF, and VVAF…LAII.

The protein belongs to the complex I subunit 4L family. NDH-1 is composed of 14 different subunits. Subunits NuoA, H, J, K, L, M, N constitute the membrane sector of the complex.

The protein resides in the cell membrane. It carries out the reaction a quinone + NADH + 5 H(+)(in) = a quinol + NAD(+) + 4 H(+)(out). Functionally, NDH-1 shuttles electrons from NADH, via FMN and iron-sulfur (Fe-S) centers, to quinones in the respiratory chain. The immediate electron acceptor for the enzyme in this species is believed to be a menaquinone. Couples the redox reaction to proton translocation (for every two electrons transferred, four hydrogen ions are translocated across the cytoplasmic membrane), and thus conserves the redox energy in a proton gradient. The sequence is that of NADH-quinone oxidoreductase subunit K from Mycobacterium sp. (strain KMS).